Here is a 36-residue protein sequence, read N- to C-terminus: Photosystem I reaction center subunit VIII (36 aa).

The chain crosses the membrane as a helical span at residues 10 to 30 (FVPLVGLVFSAIIMVLSFLYI).

It belongs to the PsaI family.

Its subcellular location is the plastid. The protein localises to the chloroplast thylakoid membrane. Its function is as follows. May help in the organization of the PsaL subunit. In Welwitschia mirabilis (Tree tumbo), this protein is Photosystem I reaction center subunit VIII.